A 150-amino-acid polypeptide reads, in one-letter code: UPF0756 membrane protein A1S_2121 (150 aa).

4 helical membrane passes run 22–42 (SQNA…ITPL), 45–65 (FFPY…TIGV), 83–103 (FISF…WLGG), and 115–135 (VVAG…GVPV).

Belongs to the UPF0756 family.

Its subcellular location is the cell membrane. This Acinetobacter baumannii (strain ATCC 17978 / DSM 105126 / CIP 53.77 / LMG 1025 / NCDC KC755 / 5377) protein is UPF0756 membrane protein A1S_2121.